We begin with the raw amino-acid sequence, 241 residues long: Uridylate kinase (241 aa).

ATP-binding positions include Lys10–Gly13, Gly53, and Arg57. UMP-binding positions include Asp72 and Ala133–Thr140. ATP contacts are provided by Asn161, Tyr167, and Asp170.

The protein belongs to the UMP kinase family. In terms of assembly, homohexamer.

It localises to the cytoplasm. The catalysed reaction is UMP + ATP = UDP + ADP. It participates in pyrimidine metabolism; CTP biosynthesis via de novo pathway; UDP from UMP (UMPK route): step 1/1. With respect to regulation, inhibited by UTP. Functionally, catalyzes the reversible phosphorylation of UMP to UDP. In Aster yellows witches'-broom phytoplasma (strain AYWB), this protein is Uridylate kinase.